The primary structure comprises 353 residues: Thiamine-phosphate synthase (353 aa).

The segment at 1 to 128 (MKSMPFAPIA…AASAAAIRYG (128 aa)) is unknown. Positions 129–353 (LYDLEVTVLQ…TSLQLLEALR (225 aa)) are thiamine-phosphate synthase. Residues 185-189 (QYRNK) and N217 contribute to the 4-amino-2-methyl-5-(diphosphooxymethyl)pyrimidine site. 2 residues coordinate Mg(2+): D218 and D237. 4-amino-2-methyl-5-(diphosphooxymethyl)pyrimidine is bound at residue S256. 282–284 (TAT) is a 2-[(2R,5Z)-2-carboxy-4-methylthiazol-5(2H)-ylidene]ethyl phosphate binding site. K285 contributes to the 4-amino-2-methyl-5-(diphosphooxymethyl)pyrimidine binding site. G312 contributes to the 2-[(2R,5Z)-2-carboxy-4-methylthiazol-5(2H)-ylidene]ethyl phosphate binding site.

The protein belongs to the thiamine-phosphate synthase family. Mg(2+) serves as cofactor.

It catalyses the reaction 2-[(2R,5Z)-2-carboxy-4-methylthiazol-5(2H)-ylidene]ethyl phosphate + 4-amino-2-methyl-5-(diphosphooxymethyl)pyrimidine + 2 H(+) = thiamine phosphate + CO2 + diphosphate. The enzyme catalyses 2-(2-carboxy-4-methylthiazol-5-yl)ethyl phosphate + 4-amino-2-methyl-5-(diphosphooxymethyl)pyrimidine + 2 H(+) = thiamine phosphate + CO2 + diphosphate. It carries out the reaction 4-methyl-5-(2-phosphooxyethyl)-thiazole + 4-amino-2-methyl-5-(diphosphooxymethyl)pyrimidine + H(+) = thiamine phosphate + diphosphate. The protein operates within cofactor biosynthesis; thiamine diphosphate biosynthesis; thiamine phosphate from 4-amino-2-methyl-5-diphosphomethylpyrimidine and 4-methyl-5-(2-phosphoethyl)-thiazole: step 1/1. Condenses 4-methyl-5-(beta-hydroxyethyl)thiazole monophosphate (THZ-P) and 2-methyl-4-amino-5-hydroxymethyl pyrimidine pyrophosphate (HMP-PP) to form thiamine monophosphate (TMP). This Prochlorococcus marinus (strain MIT 9313) protein is Thiamine-phosphate synthase.